Here is a 34-residue protein sequence, read N- to C-terminus: Trypsin inhibitor (34 aa).

Cystine bridges form between cysteine 7/cysteine 29 and cysteine 11/cysteine 25.

The protein resides in the secreted. In terms of biological role, inhibits trypsin. This chain is Trypsin inhibitor, found in Veronica hederifolia (Ivy-leaved speedwell).